The primary structure comprises 136 residues: Urease subunit beta (136 aa).

Positions 113–136 (NDEYAGVFGDNGAENVNKKGGKRS) are disordered.

It belongs to the urease beta subunit family. Heterotrimer of UreA (gamma), UreB (beta) and UreC (alpha) subunits. Three heterotrimers associate to form the active enzyme.

It is found in the cytoplasm. It catalyses the reaction urea + 2 H2O + H(+) = hydrogencarbonate + 2 NH4(+). Its pathway is nitrogen metabolism; urea degradation; CO(2) and NH(3) from urea (urease route): step 1/1. The polypeptide is Urease subunit beta (Staphylococcus aureus (strain USA300)).